The sequence spans 201 residues: Guanylate kinase (201 aa).

Residues 2-180 (SCLFVISAPS…AARDVASIVQ (179 aa)) form the Guanylate kinase-like domain. Position 9 to 16 (9 to 16 (APSGAGKT)) interacts with ATP.

It belongs to the guanylate kinase family.

The protein localises to the cytoplasm. It carries out the reaction GMP + ATP = GDP + ADP. Functionally, essential for recycling GMP and indirectly, cGMP. The sequence is that of Guanylate kinase from Nitrosomonas europaea (strain ATCC 19718 / CIP 103999 / KCTC 2705 / NBRC 14298).